The following is a 267-amino-acid chain: 2-keto-3-deoxy-L-rhamnonate aldolase (267 aa).

The Proton acceptor role is filled by H49. Q151 contributes to the substrate binding site. Residue E153 coordinates Mg(2+). Residues A178 and D179 each contribute to the substrate site. Mg(2+) is bound at residue D179.

It belongs to the HpcH/HpaI aldolase family. KDR aldolase subfamily. In terms of assembly, homohexamer. Mg(2+) is required as a cofactor.

It carries out the reaction 2-dehydro-3-deoxy-L-rhamnonate = (S)-lactaldehyde + pyruvate. Catalyzes the reversible retro-aldol cleavage of 2-keto-3-deoxy-L-rhamnonate (KDR) to pyruvate and lactaldehyde. This chain is 2-keto-3-deoxy-L-rhamnonate aldolase, found in Shigella sonnei (strain Ss046).